The chain runs to 445 residues: Acyl-lipid (7-3)-desaturase (445 aa).

A Cytochrome b5 heme-binding domain is found at 11–91; the sequence is VAELRAAEVA…MSKFFVGSLD (81 aa). Heme is bound by residues His-50 and His-73. A run of 2 helical transmembrane segments spans residues 126-146 and 148-168; these read YWLKAAALVVAAVSIEGYMLL and GKTLLLSVFLGLVFAWIGLNI. The short motif at 170–174 is the Histidine box-1 element; it reads HDANH. The short motif at 205 to 210 is the Histidine box-2 element; the sequence is HVVMHH. 3 consecutive transmembrane segments (helical) span residues 247 to 267, 283 to 303, and 312 to 332; these read ILPGEAMYAFKLLFLDALELL, LFAPAVACKLGFWARFVALPL, and ALCICATVCTGSFYLAFFFFI. Residues 380–384 carry the Histidine box-3 motif; the sequence is QIEHH.

The protein belongs to the fatty acid desaturase type 1 family. Fe(2+) serves as cofactor.

The protein resides in the membrane. It carries out the reaction a (7Z,10Z,13Z,16Z,19Z)-docosapentaenoyl-containing glycerolipid + 2 Fe(II)-[cytochrome b5] + O2 + 2 H(+) = a (4Z,7Z,10Z,13Z,16Z,19Z)-docosahexaenoyl-containing glycerolipid + 2 Fe(III)-[cytochrome b5] + 2 H2O. It catalyses the reaction a (7Z,10Z,13Z,16Z)-docosatetraenoyl-containing glycerolipid + 2 Fe(II)-[cytochrome b5] + O2 + 2 H(+) = a (4Z,7Z,10Z,13Z,16Z)-docosapentaenoyl-containing glycerolipid + 2 Fe(III)-[cytochrome b5] + 2 H2O. Its function is as follows. Fatty acid desaturase that introduces a cis double bond at the 4-position in 22-carbon polyunsaturated fatty acids that contain a Delta(7) double bond, resulting in the production of delta-4 desaturated fatty acid docosahexanoic acid (DHA). Mediates desaturation of 22:5n-3 and 22:4n-6 into 22:6n-3 and 22:5n-6 respectively. The protein is Acyl-lipid (7-3)-desaturase of Diacronema lutheri (Unicellular marine alga).